Consider the following 732-residue polypeptide: Serine/threonine-protein kinase CBK1 (732 aa).

A disordered region spans residues 111–240; the sequence is SFDNHLNVDP…STEAANSDMT (130 aa). The span at 119–159 shows a compositional bias: polar residues; that stretch reads DPNNTERFTSMDSMNFQPPASTFTQLGNGSSTNLSEISSGQ. The segment covering 160 to 171 has biased composition (low complexity); it reads NSLLSNHSVNNL. Positions 172-183 are enriched in polar residues; it reads PTALTSDTSPPV. A compositionally biased stretch (low complexity) spans 185-221; sequence QHPQFQPQQQQQQQQPQQQQIFQQQQQQQQQQQQPQQ. Over residues 222–240 the composition is skewed to polar residues; the sequence is SRAVVNQSVSTEAANSDMT. Residues 281 to 310 are a coiled coil; it reads HAIERNQRRLELENKIANEDIGSSEERKNR. The Protein kinase domain maps to 335 to 647; that stretch reads FHTVKVIGKG…AEEIKQHPFF (313 aa). Residues 341 to 349 and Lys364 each bind ATP; that span reads IGKGAFGEV. The active-site Proton acceptor is Asp458. In terms of domain architecture, AGC-kinase C-terminal spans 648–730; that stretch reads RGVDWDSIRD…SRFDYLTRKN (83 aa).

Belongs to the protein kinase superfamily. STE Ser/Thr protein kinase family. COT1 subfamily. Interacts with MOB2 and BCR1.

Its subcellular location is the bud neck. It is found in the cell tip. It catalyses the reaction L-seryl-[protein] + ATP = O-phospho-L-seryl-[protein] + ADP + H(+). The enzyme catalyses L-threonyl-[protein] + ATP = O-phospho-L-threonyl-[protein] + ADP + H(+). Its function is as follows. Serine/threonine-protein kinase required for wild-type hyphal growth and transcriptional regulation of cell-wall-associated genes. Involved in the biofilm formation through phosphorylation of the master regulator of biofilm formation BCR1. The polypeptide is Serine/threonine-protein kinase CBK1 (CBK1) (Candida albicans (strain SC5314 / ATCC MYA-2876) (Yeast)).